We begin with the raw amino-acid sequence, 260 residues long: MLILVTNDDGINAPGIKALSRSLARVGRVAVVAPEKERSAIGHGITMHKPLRATEVTWEGPVEMALAVNGTPADCVKLALDALLDEEPSLVVSGINMGANLGTDVLYSGTVSGALEGCINGRPSLAVSLAGEGGVDFSFAADFTSRLAGVIIKRGLPAGTLLNLNIPCLPPGEIKGLAITRLGRRRYCNTITRRLDPRGRAYYWLAGEVEDLDQEPDTDIGALGQGRISITPLHLDLTNYSYQQELAAYLSFLWPGQGNR.

Residues Asp8, Asp9, Ser39, and Asn96 each coordinate a divalent metal cation.

This sequence belongs to the SurE nucleotidase family. A divalent metal cation serves as cofactor.

It is found in the cytoplasm. The catalysed reaction is a ribonucleoside 5'-phosphate + H2O = a ribonucleoside + phosphate. Its function is as follows. Nucleotidase that shows phosphatase activity on nucleoside 5'-monophosphates. This chain is 5'-nucleotidase SurE, found in Moorella thermoacetica (strain ATCC 39073 / JCM 9320).